Reading from the N-terminus, the 467-residue chain is Citrate synthase, mitochondrial (467 aa).

Residues H301 and H347 contribute to the active site.

This sequence belongs to the citrate synthase family.

The protein resides in the mitochondrion matrix. It catalyses the reaction oxaloacetate + acetyl-CoA + H2O = citrate + CoA + H(+). It functions in the pathway carbohydrate metabolism; tricarboxylic acid cycle; isocitrate from oxaloacetate: step 1/2. The polypeptide is Citrate synthase, mitochondrial (CIT) (Candida tropicalis (Yeast)).